The chain runs to 423 residues: Putative competence-damage inducible protein (423 aa).

This sequence belongs to the CinA family.

The polypeptide is Putative competence-damage inducible protein (Streptococcus pyogenes serotype M18 (strain MGAS8232)).